The primary structure comprises 272 residues: Large ribosomal subunit protein uL2 (272 aa).

Positions 222–272 (GVAMNPIDHPLGGGEGKSSGGRAACTPWGKPEGVKTRKNKRTDKFIIKRRK) are disordered. A compositionally biased stretch (basic and acidic residues) spans 263 to 272 (TDKFIIKRRK).

The protein belongs to the universal ribosomal protein uL2 family. As to quaternary structure, part of the 50S ribosomal subunit. Forms a bridge to the 30S subunit in the 70S ribosome.

In terms of biological role, one of the primary rRNA binding proteins. Required for association of the 30S and 50S subunits to form the 70S ribosome, for tRNA binding and peptide bond formation. It has been suggested to have peptidyltransferase activity; this is somewhat controversial. Makes several contacts with the 16S rRNA in the 70S ribosome. The sequence is that of Large ribosomal subunit protein uL2 from Thermodesulfovibrio yellowstonii (strain ATCC 51303 / DSM 11347 / YP87).